Reading from the N-terminus, the 392-residue chain is Chalcone synthase 1 (392 aa).

Cys167 is an active-site residue.

The protein belongs to the thiolase-like superfamily. Chalcone/stilbene synthases family.

It carries out the reaction (E)-4-coumaroyl-CoA + 3 malonyl-CoA + 3 H(+) = 2',4,4',6'-tetrahydroxychalcone + 3 CO2 + 4 CoA. It participates in secondary metabolite biosynthesis; flavonoid biosynthesis. Functionally, the primary product of this enzyme is 4,2',4',6'-tetrahydroxychalcone (also termed naringenin-chalcone or chalcone) which can under specific conditions spontaneously isomerize into naringenin. In Secale cereale (Rye), this protein is Chalcone synthase 1 (CHS1).